Here is a 415-residue protein sequence, read N- to C-terminus: Thyroxine-binding globulin (415 aa).

Positions 1 to 20 (MSPFLYLVLLVLGLHATIHC) are cleaved as a signal peptide. 4 N-linked (GlcNAc...) asparagine glycosylation sites follow: asparagine 36, asparagine 99, asparagine 165, and asparagine 253. 2 residues coordinate thyroxine: asparagine 293 and arginine 398.

Belongs to the serpin family.

It localises to the secreted. In terms of biological role, major thyroid hormone transport protein in serum. This is Thyroxine-binding globulin (SERPINA7) from Pan troglodytes (Chimpanzee).